Reading from the N-terminus, the 81-residue chain is MGQWLIWCIRFYQRFLSPLKPPTCRFYPTCSNYGIEAIRRFGAIKGGWLTAKRILKCHPFHPGGFDPVPESSEHAKRNKIT.

Belongs to the UPF0161 family.

It localises to the cell membrane. Functionally, could be involved in insertion of integral membrane proteins into the membrane. The polypeptide is Putative membrane protein insertion efficiency factor (Geobacillus kaustophilus (strain HTA426)).